Reading from the N-terminus, the 72-residue chain is Protein CYSTEINE-RICH TRANSMEMBRANE MODULE 9 (72 aa).

Residues 1–22 (MNPSEQNHLSVEKPSQTSSGPY) show a composition bias toward polar residues. The interval 1–46 (MNPSEQNHLSVEKPSQTSSGPYTSPPPIGYPTRDAMVGDPPAAAVE) is disordered. Residues 49–65 (SKGDGFWKGCCAAICCC) form a helical membrane-spanning segment.

The protein belongs to the CYSTM1 family. In terms of assembly, heterodimers. Interacts with WIH1/CYSTM13. As to expression, mostly expressed in roots and flowers and, to a lower extent, in stems, siliques and leaves.

It is found in the cell membrane. Its subcellular location is the nucleus. Its function is as follows. Involved in resistance to abiotic stress. The chain is Protein CYSTEINE-RICH TRANSMEMBRANE MODULE 9 from Arabidopsis thaliana (Mouse-ear cress).